Consider the following 91-residue polypeptide: Small ribosomal subunit protein bS16 (91 aa).

It belongs to the bacterial ribosomal protein bS16 family.

The sequence is that of Small ribosomal subunit protein bS16 from Exiguobacterium sp. (strain ATCC BAA-1283 / AT1b).